We begin with the raw amino-acid sequence, 286 residues long: CCR4-NOT transcription complex subunit 7 (286 aa).

Aspartate 40, glutamate 42, aspartate 161, aspartate 230, and glutamate 278 together coordinate a divalent metal cation.

The protein belongs to the CAF1 family. Component of the CCR4-NOT complex. It depends on Mn(2+) as a cofactor. Mg(2+) is required as a cofactor. The cofactor is Co(2+).

Its subcellular location is the nucleus. It localises to the cytoplasm. The enzyme catalyses Exonucleolytic cleavage of poly(A) to 5'-AMP.. Functionally, has 3'-5' poly(A) exoribonuclease activity for synthetic poly(A) RNA substrate. Catalytic component of the CCR4-NOT complex which is one of the major cellular mRNA deadenylases and is linked to various cellular processes including bulk mRNA degradation, miRNA-mediated repression, translational repression during translational initiation and general transcription regulation. During miRNA-mediated repression the complex also seems to act as translational repressor during translational initiation. Additional complex functions may be a consequence of its influence on mRNA expression. This chain is CCR4-NOT transcription complex subunit 7 (cnot7), found in Danio rerio (Zebrafish).